A 466-amino-acid chain; its full sequence is Membrane-bound lytic murein transglycosylase F (466 aa).

Positions 1 to 24 are cleaved as a signal peptide; the sequence is MKRFKLNYFIIGLIAILLTWSLWT. The non-LT domain stretch occupies residues 25 to 268; sequence TVPWRNAHQD…RLEEKYLGHV (244 aa). The segment at 269 to 466 is LT domain; it reads GGFDYVDTKT…KEKKAAQLAD (198 aa). The active site involves Glu-313.

In the N-terminal section; belongs to the bacterial solute-binding protein 3 family. The protein in the C-terminal section; belongs to the transglycosylase Slt family.

The protein localises to the cell outer membrane. The enzyme catalyses Exolytic cleavage of the (1-&gt;4)-beta-glycosidic linkage between N-acetylmuramic acid (MurNAc) and N-acetylglucosamine (GlcNAc) residues in peptidoglycan, from either the reducing or the non-reducing ends of the peptidoglycan chains, with concomitant formation of a 1,6-anhydrobond in the MurNAc residue.. Its function is as follows. Murein-degrading enzyme that degrades murein glycan strands and insoluble, high-molecular weight murein sacculi, with the concomitant formation of a 1,6-anhydromuramoyl product. Lytic transglycosylases (LTs) play an integral role in the metabolism of the peptidoglycan (PG) sacculus. Their lytic action creates space within the PG sacculus to allow for its expansion as well as for the insertion of various structures such as secretion systems and flagella. The polypeptide is Membrane-bound lytic murein transglycosylase F (Sodalis glossinidius (strain morsitans)).